Consider the following 271-residue polypeptide: S-adenosylmethionine decarboxylase proenzyme (271 aa).

Catalysis depends on serine 121, which acts as the Schiff-base intermediate with substrate; via pyruvic acid. The residue at position 121 (serine 121) is a Pyruvic acid (Ser); by autocatalysis. The active-site Proton acceptor; for processing activity is histidine 126. Cysteine 149 acts as the Proton donor; for catalytic activity in catalysis.

The protein belongs to the prokaryotic AdoMetDC family. Type 2 subfamily. As to quaternary structure, heterooctamer of four alpha and four beta chains arranged as a tetramer of alpha/beta heterodimers. Pyruvate is required as a cofactor. In terms of processing, is synthesized initially as an inactive proenzyme. Formation of the active enzyme involves a self-maturation process in which the active site pyruvoyl group is generated from an internal serine residue via an autocatalytic post-translational modification. Two non-identical subunits are generated from the proenzyme in this reaction, and the pyruvate is formed at the N-terminus of the alpha chain, which is derived from the carboxyl end of the proenzyme. The post-translation cleavage follows an unusual pathway, termed non-hydrolytic serinolysis, in which the side chain hydroxyl group of the serine supplies its oxygen atom to form the C-terminus of the beta chain, while the remainder of the serine residue undergoes an oxidative deamination to produce ammonia and the pyruvoyl group blocking the N-terminus of the alpha chain.

The enzyme catalyses S-adenosyl-L-methionine + H(+) = S-adenosyl 3-(methylsulfanyl)propylamine + CO2. It functions in the pathway amine and polyamine biosynthesis; S-adenosylmethioninamine biosynthesis; S-adenosylmethioninamine from S-adenosyl-L-methionine: step 1/1. In terms of biological role, catalyzes the decarboxylation of S-adenosylmethionine to S-adenosylmethioninamine (dcAdoMet), the propylamine donor required for the synthesis of the polyamines spermine and spermidine from the diamine putrescine. The protein is S-adenosylmethionine decarboxylase proenzyme of Clostridium beijerinckii (strain ATCC 51743 / NCIMB 8052) (Clostridium acetobutylicum).